The primary structure comprises 467 residues: MAIKTPKEIVKILNEYIIGQDEAKKSVAIALYNRYRRMQLSKQMQHEITPKNLLMAGPTGVGKTEIARRLASIVEAPFVKVEATKFTEVGYVGRDVESMVRDLVGEAVRMEEKDQFARVKPQATKEANKQLVRLLAPGVKREKRENQMQQMQDMMSMLMGGANPNNQNNDQEEVTDEVRNERMDVAEKLNKGLLEDREVTIEVEQAPKANPMSDMMGQMGMDMGSMLNDIMPKKKVKRTLSVRDAREVLIQEESRKMVDYDTIYQRAIERSQNNGIIFIDEIDKIIAGNKRNSGEVSREGVQRDVLPIVEGSTVNTKYGPVSTDHILFIAAGAFAESKPSDLIPELQGRFPIRVELNALTKDDFVKILKDPQNSLLKQYIALMKADGIKLIFTQEAVDKIAQIAFDVNQGTDNIGARRLSTILEKLLEDVLYEGPDMEMGEITITEAYVEEKLHDIIMNKDLTKFIL.

ATP-binding positions include isoleucine 18, 60–65, aspartate 280, glutamate 345, and arginine 417; that span reads GVGKTE.

It belongs to the ClpX chaperone family. HslU subfamily. In terms of assembly, a double ring-shaped homohexamer of HslV is capped on each side by a ring-shaped HslU homohexamer. The assembly of the HslU/HslV complex is dependent on binding of ATP.

It is found in the cytoplasm. ATPase subunit of a proteasome-like degradation complex; this subunit has chaperone activity. The binding of ATP and its subsequent hydrolysis by HslU are essential for unfolding of protein substrates subsequently hydrolyzed by HslV. HslU recognizes the N-terminal part of its protein substrates and unfolds these before they are guided to HslV for hydrolysis. The protein is ATP-dependent protease ATPase subunit HslU of Lactobacillus helveticus (strain DPC 4571).